The sequence spans 461 residues: Coronin-1A (461 aa).

Residue serine 2 is modified to N-acetylserine. Position 2 is a phosphoserine; by PKC (serine 2). WD repeat units follow at residues 13–63 (HVFG…LVLP), 73–110 (NAPTVCGHTAPVLDIAWCPHNDNVIASGSEDCTVMVWE), 123–160 (PVVTLEGHTKRVGIVAWHTTAQNVLLSAGCDNVIMVWD), 164–204 (GAAM…RIIE), 207–251 (KGTV…ALWD), 258–296 (PLSLQELDTSSGVLLPFFDPDTNIVYLCGKGDSSIRYFE), and 302–349 (PFLH…EPIA). The span at 403-418 (ELRVNRGLDTGRRRAA) shows a compositional bias: basic and acidic residues. The segment at 403–432 (ELRVNRGLDTGRRRAAPEASGTPSSDAVSR) is disordered. Threonine 412 is modified (phosphothreonine; by PKC). Serine 422 is modified (phosphoserine). Positions 424–460 (TPSSDAVSRLEEEMRKLQATVQELQKRLDRLEETVQA) form a coiled coil. Lysine 449 carries the post-translational modification N6-acetyllysine.

The protein belongs to the WD repeat coronin family. In terms of assembly, binds actin. Post-translationally, phosphorylation at Thr-412 by PKC strongly down-regulates the association with actin. Polyubiquitinated by RNF128 with 'Lys-48'-linked chains, leading to proteasomal degradation. Expressed in brain, thymus, spleen, bone marrow and lymph node. Low in lung and gut.

The protein localises to the cytoplasm. It localises to the cytoskeleton. Its subcellular location is the cell cortex. The protein resides in the cytoplasmic vesicle. It is found in the phagosome membrane. Its function is as follows. May be a crucial component of the cytoskeleton of highly motile cells, functioning both in the invagination of large pieces of plasma membrane, as well as in forming protrusions of the plasma membrane involved in cell locomotion. In mycobacteria-infected cells, its retention on the phagosomal membrane prevents fusion between phagosomes and lysosomes. In Homo sapiens (Human), this protein is Coronin-1A (CORO1A).